Reading from the N-terminus, the 219-residue chain is Tritrans,polycis-undecaprenyl-diphosphate synthase (geranylgeranyl-diphosphate specific) (219 aa).

Aspartate 12 is an active-site residue. Residue aspartate 12 coordinates Mg(2+). Residues 13–16, tryptophan 17, and 59–61 contribute to the substrate site; these read GNRR and SRD. The active-site Proton acceptor is asparagine 62. Substrate contacts are provided by residues arginine 66, arginine 168, and 174–176; that span reads RLS. Residue glutamate 187 participates in Mg(2+) binding.

The protein belongs to the UPP synthase family. As to quaternary structure, homodimer. Mg(2+) serves as cofactor.

The enzyme catalyses geranylgeranyl diphosphate + 7 isopentenyl diphosphate = tri-trans,hepta-cis-undecaprenyl diphosphate + 7 diphosphate. Functionally, catalyzes the sequential condensation of isopentenyl diphosphate (IPP) with geranylgeranyl diphosphate (GGPP) to yield (2Z,6Z,10Z,14Z,18Z,22Z,26Z,30E,34E,38E)-undecaprenyl diphosphate (tritrans,heptacis-UPP). It is probably the precursor of glycosyl carrier lipids. The sequence is that of Tritrans,polycis-undecaprenyl-diphosphate synthase (geranylgeranyl-diphosphate specific) from Aeropyrum pernix (strain ATCC 700893 / DSM 11879 / JCM 9820 / NBRC 100138 / K1).